A 435-amino-acid polypeptide reads, in one-letter code: GTPase Obg (435 aa).

Residues 1 to 158 (MFIDRAKIYV…RWLYLELKLL (158 aa)) form the Obg domain. In terms of domain architecture, OBG-type G spans 159–328 (ADVGLVGLPN…LLELMEKYVR (170 aa)). GTP-binding positions include 165 to 172 (GLPNAGKS), 190 to 194 (FTTKT), 211 to 214 (DIPG), 280 to 283 (NKID), and 309 to 311 (SAK). 2 residues coordinate Mg(2+): S172 and T192. An OCT domain is found at 343–426 (IQETKEGRVE…IGDYIFKYNA (84 aa)).

It belongs to the TRAFAC class OBG-HflX-like GTPase superfamily. OBG GTPase family. In terms of assembly, monomer. Requires Mg(2+) as cofactor.

Its subcellular location is the cytoplasm. Functionally, an essential GTPase which binds GTP, GDP and possibly (p)ppGpp with moderate affinity, with high nucleotide exchange rates and a fairly low GTP hydrolysis rate. Plays a role in control of the cell cycle, stress response, ribosome biogenesis and in those bacteria that undergo differentiation, in morphogenesis control. In Dictyoglomus thermophilum (strain ATCC 35947 / DSM 3960 / H-6-12), this protein is GTPase Obg.